Here is a 774-residue protein sequence, read N- to C-terminus: Beta-xylosidase/alpha-L-arabinofuranosidase 1 (774 aa).

The first 33 residues, 1–33 (ANTKNREPKVSSVFLCFSIFYVTVLLNCNHVYG), serve as a signal peptide directing secretion. Residues Asn48 and Asn136 are each glycosylated (N-linked (GlcNAc...) asparagine). Residue Asp303 is part of the active site. N-linked (GlcNAc...) asparagine glycosylation is found at Asn437 and Asn530.

It belongs to the glycoside hydrolase 3 family. In terms of processing, proteolytically cleaved in roots to form a 65 kDa protein.

It is found in the secreted. The protein localises to the extracellular space. The protein resides in the extracellular matrix. It catalyses the reaction Hydrolysis of (1-&gt;4)-beta-D-xylans, to remove successive D-xylose residues from the non-reducing termini.. The catalysed reaction is Hydrolysis of terminal non-reducing alpha-L-arabinofuranoside residues in alpha-L-arabinosides.. Functionally, a bifunctional beta-xylosidase/alpha-L-arabinosidase, exo-enzyme that acts synergistically with endohydrolases. Releases xylose and arabinose from cell walls. Does not cleave xylan from oat spelts although xylan from oat spelts was degraded to xylose when this enzyme was used in combination with xylanase. Also releases xylose and arabinose from aryl glycosides, xylo-oligosaccharides, arabinan from sugar beet and arabino-oligosaccharides, arabinan from sugar beet and arabinoxylan from wheat. This is Beta-xylosidase/alpha-L-arabinofuranosidase 1 from Medicago sativa subsp. varia (Alfalfa).